A 206-amino-acid polypeptide reads, in one-letter code: Large ribosomal subunit protein uL4 (206 aa).

It belongs to the universal ribosomal protein uL4 family. As to quaternary structure, part of the 50S ribosomal subunit.

Its function is as follows. One of the primary rRNA binding proteins, this protein initially binds near the 5'-end of the 23S rRNA. It is important during the early stages of 50S assembly. It makes multiple contacts with different domains of the 23S rRNA in the assembled 50S subunit and ribosome. In terms of biological role, forms part of the polypeptide exit tunnel. The protein is Large ribosomal subunit protein uL4 of Bradyrhizobium sp. (strain ORS 278).